A 398-amino-acid polypeptide reads, in one-letter code: Selenide, water dikinase (398 aa).

The disordered stretch occupies residues 1–21 (MSHKRPQSSAGESNGAVDLKT). Residue cysteine 46 is part of the active site. ATP-binding positions include lysine 49, 72-74 (GMD), aspartate 97, aspartate 120, and 171-174 (GGQT). A Mg(2+)-binding site is contributed by aspartate 74. Residue aspartate 120 coordinates Mg(2+). Aspartate 278 contributes to the Mg(2+) binding site.

It belongs to the selenophosphate synthase 1 family. Class I subfamily. As to quaternary structure, homodimer. Requires Mg(2+) as cofactor.

The catalysed reaction is hydrogenselenide + ATP + H2O = selenophosphate + AMP + phosphate + 2 H(+). In terms of biological role, synthesizes selenophosphate from selenide and ATP. The chain is Selenide, water dikinase from Leishmania major.